The following is a 527-amino-acid chain: Organic cation/carnitine transporter 2 (527 aa).

At 1 to 27 (MAEPTQPLLTDSNSSSPRSLDDTIESY) the chain is on the cytoplasmic side. The chain crosses the membrane as a helical span at residues 28–48 (IGSFGWAQFLQAALVSFSGVF). At 49–119 (DAQQTFISVF…SFVKGLPESS (71 aa)) the chain is on the extracellular side. Residues 120–140 (FFVGCLIGGLVLSTLADSSLG) form a helical membrane-spanning segment. Residues 141-149 (RKNMLFLSC) are Cytoplasmic-facing. Residues 150 to 170 (LVMAISTMLTVFSPNIWVYAV) form a helical membrane-spanning segment. At 171-176 (LRFVNG) the chain is on the extracellular side. A helical membrane pass occupies residues 177 to 195 (FGRATIGTCALVLSTELVG). An ATP-binding site is contributed by 190 to 197 (STELVGKK). Over 196 to 201 (KKWRGR) the chain is Cytoplasmic. A helical transmembrane segment spans residues 202-222 (VGIMSFFGFMLGFLSLPLMAY). Residues 223-230 (MNRGSSWR) are Extracellular-facing. Residues 231 to 251 (ILYAWTSIPTIIYCVLVRFFV) traverse the membrane as a helical segment. Residues 252 to 326 (CESPRWLFVR…LVEKRWALKR (75 aa)) are Cytoplasmic-facing. The helical transmembrane segment at 327–347 (LSAVMAIAFGIGLVYYGMPLA) threads the bilayer. The Extracellular portion of the chain corresponds to 348-356 (LSNLDFNIY). A helical membrane pass occupies residues 357–377 (LSAAFNALMDLPANLITLFLV). Residues 378 to 385 (DKLSRRNA) are Cytoplasmic-facing. A helical membrane pass occupies residues 386-406 (LIGFTALGGVSSVLIFALHNM). Over 407-415 (RIGNHGALQ) the chain is Extracellular. Residues 416–436 (LALELISYFSACSAFNMEMIY) traverse the membrane as a helical segment. Residues 437-448 (TIELFPTCVRNS) are Cytoplasmic-facing. The chain crosses the membrane as a helical span at residues 449-469 (AIAMARQALVLGGVFSPIMVA). The Extracellular segment spans residues 470-475 (AGRKNA). A helical transmembrane segment spans residues 476–496 (FWSFGLFGLAIGLLGLFAVGL). Topologically, residues 497–527 (PETRGSDLCDTMDEEECKDRRSKVAVNNVIA) are cytoplasmic.

Belongs to the major facilitator (TC 2.A.1) superfamily. Organic cation transporter (TC 2.A.1.19) family. In terms of tissue distribution, weakly expressed in roots, including tips and initiation site of lateral roots, siliques and flowers, especially in pollen and stigma.

The protein localises to the vacuole membrane. Its function is as follows. High affinity carnitine transporter involved in the active cellular uptake of carnitine. Also transports organic cations. This chain is Organic cation/carnitine transporter 2 (OCT2), found in Arabidopsis thaliana (Mouse-ear cress).